Here is a 559-residue protein sequence, read N- to C-terminus: Glucose-6-phosphate isomerase 4 (559 aa).

The active-site Proton donor is the Glu356. Active-site residues include His387 and Lys513.

The protein belongs to the GPI family.

It localises to the cytoplasm. The enzyme catalyses alpha-D-glucose 6-phosphate = beta-D-fructose 6-phosphate. The protein operates within carbohydrate biosynthesis; gluconeogenesis. Its pathway is carbohydrate degradation; glycolysis; D-glyceraldehyde 3-phosphate and glycerone phosphate from D-glucose: step 2/4. Catalyzes the reversible isomerization of glucose-6-phosphate to fructose-6-phosphate. This is Glucose-6-phosphate isomerase 4 from Rhodococcus jostii (strain RHA1).